The primary structure comprises 670 residues: Zinc finger protein 526 (670 aa).

C2H2-type zinc fingers lie at residues 57–79, 108–130, and 140–163; these read FMCS…QEQH, FQCG…QDAH, and YQCW…KAQH. 2 disordered regions span residues 168–196 and 217–304; these read VAEP…KMEP and GTHF…ATHP. Over residues 171 to 189 the composition is skewed to pro residues; that stretch reads PPVPPPLPPPTPLPPPSPP. Residues 197-219 form a C2H2-type 4 zinc finger; the sequence is YECPECSTLCATPEEFLEHQGTH. The span at 217 to 231 shows a compositional bias: basic and acidic residues; it reads GTHFDSLEKEERNGL. A compositionally biased stretch (acidic residues) spans 232-263; that stretch reads EEEEEDDEEDEEDDEEMEDEEAMAEVGDDAVG. 9 consecutive C2H2-type zinc fingers follow at residues 305–327, 332–354, 360–382, 388–409, 442–465, 472–494, 500–522, 528–550, and 573–595; these read FHCS…GRAH, HECT…LRLH, YLCV…RRAH, HRCR…RRTH, LPCP…RAVH, HRCG…LRTH, FQCH…QLTH, YQCL…RRLH, and YYCG…QRVH. The interval 409-443 is disordered; that stretch reads HAGKSGAPPTGATAPPAPAEPTPPPPPPAPPAQLP. The segment covering 423-442 has biased composition (pro residues); sequence PPAPAEPTPPPPPPAPPAQL. The disordered stretch occupies residues 601-621; sequence LTLQPPRSPSPAPPPPPEPQQ. The span at 606 to 619 shows a compositional bias: pro residues; it reads PRSPSPAPPPPPEP.

Belongs to the krueppel C2H2-type zinc-finger protein family. As to expression, widely expressed.

The protein localises to the nucleus. Functionally, may be involved in transcriptional regulation. This is Zinc finger protein 526 (ZNF526) from Homo sapiens (Human).